We begin with the raw amino-acid sequence, 97 residues long: Aspartyl/glutamyl-tRNA(Asn/Gln) amidotransferase subunit C (97 aa).

It belongs to the GatC family. Heterotrimer of A, B and C subunits.

The enzyme catalyses L-glutamyl-tRNA(Gln) + L-glutamine + ATP + H2O = L-glutaminyl-tRNA(Gln) + L-glutamate + ADP + phosphate + H(+). The catalysed reaction is L-aspartyl-tRNA(Asn) + L-glutamine + ATP + H2O = L-asparaginyl-tRNA(Asn) + L-glutamate + ADP + phosphate + 2 H(+). Allows the formation of correctly charged Asn-tRNA(Asn) or Gln-tRNA(Gln) through the transamidation of misacylated Asp-tRNA(Asn) or Glu-tRNA(Gln) in organisms which lack either or both of asparaginyl-tRNA or glutaminyl-tRNA synthetases. The reaction takes place in the presence of glutamine and ATP through an activated phospho-Asp-tRNA(Asn) or phospho-Glu-tRNA(Gln). In Synechococcus sp. (strain CC9311), this protein is Aspartyl/glutamyl-tRNA(Asn/Gln) amidotransferase subunit C.